We begin with the raw amino-acid sequence, 514 residues long: CENP-B homolog protein 2 (514 aa).

One can recognise an HTH CENPB-type domain in the interval 70 to 145; that stretch reads QIRRNRQGKY…KKRCLKHGLK (76 aa). The region spanning 172-384 is the DDE-1 domain; sequence FDPKDIFNMD…FEPSIIYNCF (213 aa).

It is found in the nucleus. The protein resides in the chromosome. Its subcellular location is the centromere. Functionally, binds to the central core and core-associated repeat regions of centromeric heterochromatin. The protein is CENP-B homolog protein 2 (cbh2) of Schizosaccharomyces pombe (strain 972 / ATCC 24843) (Fission yeast).